A 214-amino-acid chain; its full sequence is Pyridoxine/pyridoxamine 5'-phosphate oxidase (214 aa).

Substrate contacts are provided by residues 8 to 11 (RINY) and lysine 66. FMN contacts are provided by residues 61–66 (RIVLIK), 76–77 (FT), arginine 82, lysine 83, and glutamine 105. 3 residues coordinate substrate: tyrosine 123, arginine 127, and serine 131. FMN contacts are provided by residues 140 to 141 (QS) and tryptophan 184. 190 to 192 (RLH) contacts substrate. Residue arginine 194 participates in FMN binding.

The protein belongs to the pyridoxamine 5'-phosphate oxidase family. In terms of assembly, homodimer. FMN serves as cofactor.

It catalyses the reaction pyridoxamine 5'-phosphate + O2 + H2O = pyridoxal 5'-phosphate + H2O2 + NH4(+). It carries out the reaction pyridoxine 5'-phosphate + O2 = pyridoxal 5'-phosphate + H2O2. The protein operates within cofactor metabolism; pyridoxal 5'-phosphate salvage; pyridoxal 5'-phosphate from pyridoxamine 5'-phosphate: step 1/1. Its pathway is cofactor metabolism; pyridoxal 5'-phosphate salvage; pyridoxal 5'-phosphate from pyridoxine 5'-phosphate: step 1/1. Catalyzes the oxidation of either pyridoxine 5'-phosphate (PNP) or pyridoxamine 5'-phosphate (PMP) into pyridoxal 5'-phosphate (PLP). In Burkholderia ambifaria (strain ATCC BAA-244 / DSM 16087 / CCUG 44356 / LMG 19182 / AMMD) (Burkholderia cepacia (strain AMMD)), this protein is Pyridoxine/pyridoxamine 5'-phosphate oxidase.